Reading from the N-terminus, the 250-residue chain is Global transcriptional regulator CodY (250 aa).

The interval 1–147 (MSTLLEKTRK…GATVVGLEIL (147 aa)) is GAF domain. Positions 195–214 (ASKIADKVGITRSVIVNALR) form a DNA-binding region, H-T-H motif.

It belongs to the CodY family.

It localises to the cytoplasm. DNA-binding global transcriptional regulator which is involved in the adaptive response to starvation and acts by directly or indirectly controlling the expression of numerous genes in response to nutrient availability. During rapid exponential growth, CodY is highly active and represses genes whose products allow adaptation to nutrient depletion. The chain is Global transcriptional regulator CodY from Thermoanaerobacter sp. (strain X514).